The following is a 478-amino-acid chain: MIQVLLVTICLAAFPYQGSSIILESGNVNDYEVIYPRKVTALPKGAVQPKYEDTMQYELKVNGQPVVLHLEKNKGLFSKDYSETHYSPDGRKITTNPSVEDHCYYHGRIENDADSTASISACNGLKGHFKLQGEMYIIEPLELSDSEDHAVFKLENVEKEDEAPKMCGVTQNWESNEPIKKASHLNLNPEHQRYVEIVIVVDHGMFTKYNGDSDKIRQRVHQMVNIMKESYRYMYIDISLAGIEIWSNKDLINVQPAAPNTLKSFGEWRETDLPKRKSHDNAQLLTSIDFNGQTIGIANIGAICDPKPSTRVVQDHSKINLRVALTMTHELSHNLGIHHDTGSCSCSGYSCIMSPVISDEPSKYFSDCSYIQCWNFIMNQKPQCILKKPLRTDTVSTPVSGNELLEARIECDCGSIENPCCYATTCKLRPGSQCAEGMCCDQCRFMKKGTVCRVSLVNKNDDTCTGQSADCPRNVLYG.

The N-terminal stretch at 1-20 (MIQVLLVTICLAAFPYQGSS) is a signal peptide. Positions 21 to 187 (IILESGNVND…PIKKASHLNL (167 aa)) are excised as a propeptide. The Peptidase M12B domain occupies 193 to 389 (RYVEIVIVVD…QKPQCILKKP (197 aa)). 3 disulfide bridges follow: C304–C384, C344–C368, and C346–C351. H329 contributes to the Zn(2+) binding site. The active site involves E330. Positions 333 and 339 each coordinate Zn(2+). Residues 390 to 408 (LRTDTVSTPVSGNELLEAR) constitute a propeptide that is removed on maturation. A Disintegrin domain is found at 397-478 (TPVSGNELLE…ADCPRNVLYG (82 aa)). 6 disulfide bridges follow: C411-C420, C413-C421, C426-C440, C434-C464, C439-C443, and C452-C471. Residues 474–478 (NVLYG) constitute a propeptide that is removed on maturation.

This sequence belongs to the venom metalloproteinase (M12B) family. P-II subfamily. P-IIa sub-subfamily. Zn(2+) serves as cofactor. Expressed by the venom gland.

The protein localises to the secreted. Its function is as follows. Snake venom zinc metalloproteinase that causes hemorrhage by provoking the degradation of the sub-endothelial matrix proteins (fibronectin, laminin, type IV collagen, nidogen, and gelatins). In terms of biological role, displays low cytotoxicity. In vitro, inhibits cancer cell migration (human breast cancer cell line MDA-MB-231) with a significant rate after 24 hours of incubation. The sequence is that of Zinc metalloproteinase/disintegrin (MPII) from Crotalus durissus collilineatus (Brazilian rattlesnake).